Consider the following 161-residue polypeptide: Phosphopantetheine adenylyltransferase (161 aa).

Ser-9 is a substrate binding site. Residues 9 to 10 and His-17 contribute to the ATP site; that span reads SF. Lys-41, Thr-73, and Arg-87 together coordinate substrate. ATP contacts are provided by residues 88-90, Glu-98, and 123-129; these read GLR and FAHISST.

Belongs to the bacterial CoaD family. In terms of assembly, homohexamer. Requires Mg(2+) as cofactor.

It is found in the cytoplasm. It carries out the reaction (R)-4'-phosphopantetheine + ATP + H(+) = 3'-dephospho-CoA + diphosphate. Its pathway is cofactor biosynthesis; coenzyme A biosynthesis; CoA from (R)-pantothenate: step 4/5. Its function is as follows. Reversibly transfers an adenylyl group from ATP to 4'-phosphopantetheine, yielding dephospho-CoA (dPCoA) and pyrophosphate. The sequence is that of Phosphopantetheine adenylyltransferase from Chloroflexus aurantiacus (strain ATCC 29366 / DSM 635 / J-10-fl).